A 151-amino-acid polypeptide reads, in one-letter code: Probable ubiquitin-conjugating enzyme E2 W-A (151 aa).

A UBC core domain is found at 3–151 (SMQKRLQKEL…TKWWYHDDTC (149 aa)). Cys91 functions as the Glycyl thioester intermediate in the catalytic mechanism.

It belongs to the ubiquitin-conjugating enzyme family.

The protein resides in the nucleus. It catalyses the reaction S-ubiquitinyl-[E1 ubiquitin-activating enzyme]-L-cysteine + [E2 ubiquitin-conjugating enzyme]-L-cysteine = [E1 ubiquitin-activating enzyme]-L-cysteine + S-ubiquitinyl-[E2 ubiquitin-conjugating enzyme]-L-cysteine.. The catalysed reaction is S-ubiquitinyl-[E1 ubiquitin-activating enzyme]-L-cysteine + [acceptor protein]-N-terminal-amino acid = [E1 ubiquitin-activating enzyme]-L-cysteine + N-terminal-ubiquitinyl-[acceptor protein].. Its pathway is protein modification; protein ubiquitination. Accepts ubiquitin from the E1 complex and catalyzes its covalent attachment to other proteins. Catalyzes monoubiquitination. Involved in degradation of misfolded chaperone substrate and DNA repair. The chain is Probable ubiquitin-conjugating enzyme E2 W-A (ube2wa) from Danio rerio (Zebrafish).